A 552-amino-acid chain; its full sequence is Dihydroxy-acid dehydratase (552 aa).

Asp-78 is a Mg(2+) binding site. [2Fe-2S] cluster is bound at residue Cys-119. Mg(2+) is bound by residues Asp-120 and Lys-121. An N6-carboxylysine modification is found at Lys-121. Cys-191 contributes to the [2Fe-2S] cluster binding site. Glu-442 lines the Mg(2+) pocket. The Proton acceptor role is filled by Ser-468.

Belongs to the IlvD/Edd family. As to quaternary structure, homodimer. Requires [2Fe-2S] cluster as cofactor. It depends on Mg(2+) as a cofactor.

The catalysed reaction is (2R)-2,3-dihydroxy-3-methylbutanoate = 3-methyl-2-oxobutanoate + H2O. The enzyme catalyses (2R,3R)-2,3-dihydroxy-3-methylpentanoate = (S)-3-methyl-2-oxopentanoate + H2O. It participates in amino-acid biosynthesis; L-isoleucine biosynthesis; L-isoleucine from 2-oxobutanoate: step 3/4. It functions in the pathway amino-acid biosynthesis; L-valine biosynthesis; L-valine from pyruvate: step 3/4. Functions in the biosynthesis of branched-chain amino acids. Catalyzes the dehydration of (2R,3R)-2,3-dihydroxy-3-methylpentanoate (2,3-dihydroxy-3-methylvalerate) into 2-oxo-3-methylpentanoate (2-oxo-3-methylvalerate) and of (2R)-2,3-dihydroxy-3-methylbutanoate (2,3-dihydroxyisovalerate) into 2-oxo-3-methylbutanoate (2-oxoisovalerate), the penultimate precursor to L-isoleucine and L-valine, respectively. This is Dihydroxy-acid dehydratase from Moorella thermoacetica (strain ATCC 39073 / JCM 9320).